Consider the following 334-residue polypeptide: N-acetylmuramoyl-L-alanine amidase sle1 (334 aa).

The signal sequence occupies residues methionine 1–alanine 25. Positions threonine 27–valine 70 constitute a LysM 1 domain. Residues serine 71 to asparagine 86 show a composition bias toward low complexity. Positions serine 71–glycine 90 are disordered. The LysM 2 domain occupies serine 91–valine 134. The interval threonine 137–glycine 156 is disordered. Residues serine 158–valine 201 enclose the LysM 3 domain. Residues glycine 210 to histidine 334 form the Peptidase C51 domain.

It localises to the secreted. It is found in the cell surface. It catalyses the reaction Hydrolyzes the link between N-acetylmuramoyl residues and L-amino acid residues in certain cell-wall glycopeptides.. Its function is as follows. Peptidoglycan hydrolase involved in the splitting of the septum during cell division. This is N-acetylmuramoyl-L-alanine amidase sle1 (sle1) from Staphylococcus aureus (strain MRSA252).